A 369-amino-acid chain; its full sequence is Spore membrane assembly protein 2 (369 aa).

Residues 1-6 (MLFPKR) are Cytoplasmic-facing. A helical membrane pass occupies residues 7 to 27 (LIVWGVLLILSLSQFVLYLPA). Residues 28-220 (TTCTNSKGLR…NLAFILMMFN (193 aa)) lie on the Lumenal side of the membrane. Residues 221–241 (GMVFYFAVLEIIVGFLSICVV) traverse the membrane as a helical segment. The Cytoplasmic portion of the chain corresponds to 242–265 (SAFGGALSVGKRHRLFPILLKSSS). A helical membrane pass occupies residues 266 to 286 (SILVVIATLTILCNIVYLIAL). The Lumenal segment spans residues 287–319 (KTLEPEEVTDVGSDNAAVHTTGWELLKVNVGSG). A helical transmembrane segment spans residues 320–340 (FIMGLARYAIQWVLLVLAFLA). Residues 341 to 369 (ANHYKAKPKKSDKYTEDTSNSPSPDLMEK) are Cytoplasmic-facing. Positions 348–369 (PKKSDKYTEDTSNSPSPDLMEK) are disordered.

The protein belongs to the SMA2 family.

The protein localises to the prospore membrane. The protein resides in the endoplasmic reticulum. In terms of biological role, involved in spore and ascus formation. Required for the efficient assembly of the precursors of the prospore membrane to a continuous prospore membrane. The sequence is that of Spore membrane assembly protein 2 (SMA2) from Saccharomyces cerevisiae (strain YJM789) (Baker's yeast).